The chain runs to 757 residues: Cellulose synthase-like protein B5 (757 aa).

Helical transmembrane passes span alanine 24 to isoleucine 44 and valine 50 to cysteine 70. Active-site residues include aspartate 136 and aspartate 460. Transmembrane regions (helical) follow at residues leucine 531–leucine 551, isoleucine 572–phenylalanine 592, leucine 613–isoleucine 633, leucine 671–valine 691, glycine 704–leucine 724, and isoleucine 735–valine 755.

Belongs to the glycosyltransferase 2 family. Plant cellulose synthase-like B subfamily. In terms of tissue distribution, expressed in young seedlings, primarily in the vascular tissue. Expressed in the root cap.

It localises to the golgi apparatus membrane. Functionally, thought to be a Golgi-localized beta-glycan synthase that polymerize the backbones of noncellulosic polysaccharides (hemicelluloses) of plant cell wall. This Arabidopsis thaliana (Mouse-ear cress) protein is Cellulose synthase-like protein B5 (CSLB5).